A 352-amino-acid polypeptide reads, in one-letter code: 4-hydroxy-3-methylbut-2-en-1-yl diphosphate synthase (flavodoxin) (352 aa).

Residues cysteine 265, cysteine 268, cysteine 300, and glutamate 307 each coordinate [4Fe-4S] cluster.

It belongs to the IspG family. [4Fe-4S] cluster is required as a cofactor.

It catalyses the reaction (2E)-4-hydroxy-3-methylbut-2-enyl diphosphate + oxidized [flavodoxin] + H2O + 2 H(+) = 2-C-methyl-D-erythritol 2,4-cyclic diphosphate + reduced [flavodoxin]. It functions in the pathway isoprenoid biosynthesis; isopentenyl diphosphate biosynthesis via DXP pathway; isopentenyl diphosphate from 1-deoxy-D-xylulose 5-phosphate: step 5/6. Functionally, converts 2C-methyl-D-erythritol 2,4-cyclodiphosphate (ME-2,4cPP) into 1-hydroxy-2-methyl-2-(E)-butenyl 4-diphosphate. The sequence is that of 4-hydroxy-3-methylbut-2-en-1-yl diphosphate synthase (flavodoxin) from Persephonella marina (strain DSM 14350 / EX-H1).